The primary structure comprises 181 residues: Adenylate kinase (181 aa).

10-15 (GAGKGT) is an ATP binding site. The interval 30-59 (STGDLFRKNIGDGTPLGLEAKRYLDAGDLV) is NMP. AMP contacts are provided by residues Thr-31, Arg-36, 57–59 (DLV), 85–88 (GYPR), and Gln-92. Residues 126-132 (GRGRADD) are LID. Residue Arg-127 participates in ATP binding. AMP-binding residues include Arg-129 and Arg-140. Residue Gly-166 participates in ATP binding.

It belongs to the adenylate kinase family. As to quaternary structure, monomer.

The protein resides in the cytoplasm. The enzyme catalyses AMP + ATP = 2 ADP. The protein operates within purine metabolism; AMP biosynthesis via salvage pathway; AMP from ADP: step 1/1. Catalyzes the reversible transfer of the terminal phosphate group between ATP and AMP. Plays an important role in cellular energy homeostasis and in adenine nucleotide metabolism. This Mycolicibacterium smegmatis (strain ATCC 700084 / mc(2)155) (Mycobacterium smegmatis) protein is Adenylate kinase.